The chain runs to 639 residues: E3 ubiquitin-protein ligase HEL2 (639 aa).

The segment at methionine 1 to aspartate 55 is disordered. An N-acetylserine modification is found at serine 2. 2 stretches are compositionally biased toward polar residues: residues glutamate 7–lysine 26 and leucine 43–alanine 54. Threonine 57 carries the post-translational modification Phosphothreonine. An RING-type zinc finger spans residues cysteine 64–arginine 104. The LIM zinc-binding domain maps to proline 222–valine 292. Residues serine 343 to serine 354 show a composition bias toward low complexity. 2 disordered regions span residues serine 343–serine 367 and leucine 550–lysine 631. A Phosphoserine modification is found at serine 354.

Belongs to the ZNF598/HEL2 family. In terms of assembly, interacts with the E2 ubiquitin-conjugating enzyme UBC4. Interacts with histones H3 and H4.

The protein resides in the cytoplasm. It carries out the reaction S-ubiquitinyl-[E2 ubiquitin-conjugating enzyme]-L-cysteine + [acceptor protein]-L-lysine = [E2 ubiquitin-conjugating enzyme]-L-cysteine + N(6)-ubiquitinyl-[acceptor protein]-L-lysine.. It functions in the pathway protein modification; protein ubiquitination. Functionally, E3 ubiquitin-protein ligase that plays a key role in the ribosome quality control (RQC), a pathway that takes place when a ribosome has stalled during translation, leading to degradation of nascent peptide chains. HEL2 is activated when ribosomes are stalled within an mRNA following translation of prematurely polyadenylated mRNAs. Acts as a ribosome collision sensor: specifically recognizes and binds collided ribosome and ubiquitinates the 40S ribosomal proteins RPS20/uS10 and RPS3/uS3. Catalyzes 'Lys-63'-linked polyubiquitination of RPS20/uS10, promoting recruitment of the RQT (ribosome quality control trigger) complex, which drives the disassembly of stalled ribosomes, followed by degradation of nascent peptides. HEL2 also acts as an activator of the No-Go decay (NGD) pathway by mediating polyubiquitination of monoubiquitinated RPS3/uS3 and RPS7/es7: RPS3/uS3 and RPS7/es7 are first monoubiquitinated by MAG2 and MOT2/NOT4, respectively, and HEL2 mediates formation of 'Lys-63'-linked polyubiquitin chains on monoubiquitin, leading to activation of the NGD pathway in a CUE2-mediated endonucleolytic cleavage. Polyubiquitination of RPS3/uS3 also triggers degradation of non-functional 18S rRNA. The RQC pathway and the integrated stress response (ISR) antagonize each other: HEL2 prevents the activation of GCN2, while GCN2 suppresses RQC activation. The RQC pathway functions as a preventive quality control in the secretory pathway: HEL2 binds preferentially to the pre-engaged secretory ribosome-nascent chain complexes and prevents mistargeting of secretory proteins into mitochondria. Independently of its role in RQC, also involved in the polyubiquitination and proteasomal-degradation of excess histone proteins. The polypeptide is E3 ubiquitin-protein ligase HEL2 (Saccharomyces cerevisiae (strain ATCC 204508 / S288c) (Baker's yeast)).